Here is a 203-residue protein sequence, read N- to C-terminus: Pyridoxal 5'-phosphate synthase subunit PdxT (203 aa).

Residue 49–51 participates in L-glutamine binding; that stretch reads GES. The active-site Nucleophile is the cysteine 81. Residues arginine 110 and 139–140 contribute to the L-glutamine site; that span reads IR. Active-site charge relay system residues include histidine 175 and glutamate 177.

The protein belongs to the glutaminase PdxT/SNO family. In terms of assembly, in the presence of PdxS, forms a dodecamer of heterodimers. Only shows activity in the heterodimer.

The catalysed reaction is aldehydo-D-ribose 5-phosphate + D-glyceraldehyde 3-phosphate + L-glutamine = pyridoxal 5'-phosphate + L-glutamate + phosphate + 3 H2O + H(+). It carries out the reaction L-glutamine + H2O = L-glutamate + NH4(+). It functions in the pathway cofactor biosynthesis; pyridoxal 5'-phosphate biosynthesis. In terms of biological role, catalyzes the hydrolysis of glutamine to glutamate and ammonia as part of the biosynthesis of pyridoxal 5'-phosphate. The resulting ammonia molecule is channeled to the active site of PdxS. The protein is Pyridoxal 5'-phosphate synthase subunit PdxT of Parafrankia sp. (strain EAN1pec).